Consider the following 376-residue polypeptide: UPF0754 membrane protein SE_1527 (376 aa).

The next 2 helical transmembrane spans lie at 4 to 24 (ILLV…TNMI) and 356 to 376 (TLGF…AIFV).

The protein belongs to the UPF0754 family.

The protein resides in the cell membrane. The protein is UPF0754 membrane protein SE_1527 of Staphylococcus epidermidis (strain ATCC 12228 / FDA PCI 1200).